We begin with the raw amino-acid sequence, 291 residues long: Ubiquinone biosynthesis protein COQ4, mitochondrial (291 aa).

Residues 1-37 (MLGRRSVSLLRGLTELPVSSRAHTALRALSVPQTRRN) constitute a mitochondrion transit peptide. Zn(2+) contacts are provided by histidine 169, aspartate 170, histidine 173, and glutamate 185. Residues 271 to 283 (PLNEAKEAAERRS) show a composition bias toward basic and acidic residues. Positions 271–291 (PLNEAKEAAERRSKTTQNQIY) are disordered.

Belongs to the COQ4 family. Component of a multi-subunit COQ enzyme complex, composed of at least COQ3, COQ4, COQ5, COQ6, COQ7 and COQ9. The cofactor is Zn(2+).

The protein localises to the mitochondrion inner membrane. The enzyme catalyses a 4-hydroxy-3-methoxy-5-(all-trans-polyprenyl)benzoate + H(+) = a 2-methoxy-6-(all-trans-polyprenyl)phenol + CO2. It participates in cofactor biosynthesis; ubiquinone biosynthesis. In terms of biological role, lyase that catalyzes the C1-decarboxylation of 4-hydroxy-3-methoxy-5-(all-trans-polyprenyl)benzoic acid into 2-methoxy-6-(all-trans-polyprenyl)phenol during ubiquinone biosynthesis. This chain is Ubiquinone biosynthesis protein COQ4, mitochondrial, found in Coprinopsis cinerea (strain Okayama-7 / 130 / ATCC MYA-4618 / FGSC 9003) (Inky cap fungus).